Consider the following 292-residue polypeptide: Phosphatidylserine decarboxylase proenzyme (292 aa).

Residues aspartate 89, histidine 146, and serine 252 each act as charge relay system; for autoendoproteolytic cleavage activity in the active site. Serine 252 acts as the Schiff-base intermediate with substrate; via pyruvic acid; for decarboxylase activity in catalysis. Serine 252 is subject to Pyruvic acid (Ser); by autocatalysis.

The protein belongs to the phosphatidylserine decarboxylase family. PSD-B subfamily. Prokaryotic type I sub-subfamily. In terms of assembly, heterodimer of a large membrane-associated beta subunit and a small pyruvoyl-containing alpha subunit. Pyruvate serves as cofactor. In terms of processing, is synthesized initially as an inactive proenzyme. Formation of the active enzyme involves a self-maturation process in which the active site pyruvoyl group is generated from an internal serine residue via an autocatalytic post-translational modification. Two non-identical subunits are generated from the proenzyme in this reaction, and the pyruvate is formed at the N-terminus of the alpha chain, which is derived from the carboxyl end of the proenzyme. The autoendoproteolytic cleavage occurs by a canonical serine protease mechanism, in which the side chain hydroxyl group of the serine supplies its oxygen atom to form the C-terminus of the beta chain, while the remainder of the serine residue undergoes an oxidative deamination to produce ammonia and the pyruvoyl prosthetic group on the alpha chain. During this reaction, the Ser that is part of the protease active site of the proenzyme becomes the pyruvoyl prosthetic group, which constitutes an essential element of the active site of the mature decarboxylase.

Its subcellular location is the cell membrane. It catalyses the reaction a 1,2-diacyl-sn-glycero-3-phospho-L-serine + H(+) = a 1,2-diacyl-sn-glycero-3-phosphoethanolamine + CO2. It participates in phospholipid metabolism; phosphatidylethanolamine biosynthesis; phosphatidylethanolamine from CDP-diacylglycerol: step 2/2. Catalyzes the formation of phosphatidylethanolamine (PtdEtn) from phosphatidylserine (PtdSer). This chain is Phosphatidylserine decarboxylase proenzyme, found in Shewanella sp. (strain ANA-3).